The following is a 397-amino-acid chain: Lymphoid enhancer-binding factor 1 (397 aa).

Residues 1–60 (MPQLSGGGGGGDPELCATDEMIPFKDEGDPQKEKIFAEISHPEEEGDLADIKSSLVNESE) are CTNNB1-binding. Lysine 25 participates in a covalent cross-link: Glycyl lysine isopeptide (Lys-Gly) (interchain with G-Cter in SUMO). Residues 38–102 (EISHPEEEGD…KHPDGGLYNK (65 aa)) are disordered. Over residues 80–96 (PYHDKAREHPDDGKHPD) the composition is skewed to basic and acidic residues. Serine 130 carries the phosphoserine modification. Threonine 153 carries the phosphothreonine; by NLK modification. Serine 164 is subject to Phosphoserine; by NLK. Disordered regions lie at residues 164-190 (SPGS…PAPE) and 266-296 (VKQE…KRPH). Residue lysine 267 forms a Glycyl lysine isopeptide (Lys-Gly) (interchain with G-Cter in SUMO) linkage. Residues 267-294 (KQEHPHTDSDLMHVKPEHEQRKEQEPKR) show a composition bias toward basic and acidic residues. Residues 297-365 (IKKPLNAFML…LHMQLYPGWS (69 aa)) constitute a DNA-binding region (HMG box). The tract at residues 367-397 (RDNYGKKKKRKREKLQESTSGTGPRMTAAYI) is disordered.

The protein belongs to the TCF/LEF family. Binds the armadillo repeat of CTNNB1 and forms a stable complex. Interacts with TLE1, PIASG, ALYREF/THOC4, EP300, MDFI and MDFIC. Interacts with DAZAP2. Phosphorylated at Thr-153 and/or Ser-164 by NLK. Phosphorylation by NLK at these sites represses LEF1-mediated transcriptional activation of target genes of the canonical Wnt signaling pathway.

The protein localises to the nucleus. Its function is as follows. Transcription factor that binds DNA in a sequence-specific manner. Participates in the Wnt signaling pathway. Activates transcription of target genes in the presence of CTNNB1 and EP300. PIASG antagonizes both Wnt-dependent and Wnt-independent activation by LEF1. TLE1, TLE2, TLE3 and TLE4 repress transactivation mediated by LEF1 and CTNNB1. Regulates T-cell receptor alpha enhancer function. Required for IL17A expressing gamma-delta T-cell maturation and development, via binding to regulator loci of BLK to modulate expression. Acts as a positive regulator of odontoblast differentiation during mesenchymal tooth germ formation, expression is repressed during the bell stage by MSX1-mediated inhibition of CTNNB1 signaling. May play a role in hair cell differentiation and follicle morphogenesis. This is Lymphoid enhancer-binding factor 1 from Rattus norvegicus (Rat).